Consider the following 171-residue polypeptide: Zinc uptake regulation protein (171 aa).

Belongs to the Fur family.

Its function is as follows. Acts as a negative controlling element, employing Zn(2+) as a cofactor to bind the operator of the repressed genes (znuACB). The polypeptide is Zinc uptake regulation protein (zur) (Escherichia coli (strain K12)).